Consider the following 765-residue polypeptide: uncharacterized protein (765 aa).

Positions 1–22 (MKLKGFLAVGVSVFGFSGLLMA) are cleaved as a signal peptide. Cys23 is lipidated: N-palmitoyl cysteine. Residue Cys23 is the site of S-diacylglycerol cysteine attachment. Disordered regions lie at residues 177-203 (EGTPTSTTVQATVSSRSAEKKGTLEIA) and 218-255 (TAQNNSNETTKEQKQVKRSSSSSSTTSTTGETKDTTKS). Over residues 179–192 (TPTSTTVQATVSSR) the composition is skewed to polar residues. Residues 236–247 (SSSSSSTTSTTG) show a composition bias toward low complexity.

This sequence belongs to the MG185/MG260 family.

The protein localises to the cell membrane. This is an uncharacterized protein from Mycoplasma genitalium (strain ATCC 33530 / DSM 19775 / NCTC 10195 / G37) (Mycoplasmoides genitalium).